The chain runs to 215 residues: Uracil-DNA glycosylase (215 aa).

Aspartate 59 acts as the Proton acceptor in catalysis.

This sequence belongs to the uracil-DNA glycosylase (UDG) superfamily. UNG family.

The protein localises to the cytoplasm. It catalyses the reaction Hydrolyzes single-stranded DNA or mismatched double-stranded DNA and polynucleotides, releasing free uracil.. In terms of biological role, excises uracil residues from the DNA which can arise as a result of misincorporation of dUMP residues by DNA polymerase or due to deamination of cytosine. This Aliarcobacter butzleri (strain RM4018) (Arcobacter butzleri) protein is Uracil-DNA glycosylase.